A 185-amino-acid polypeptide reads, in one-letter code: Ribosome-recycling factor (185 aa).

Belongs to the RRF family.

Its subcellular location is the cytoplasm. Responsible for the release of ribosomes from messenger RNA at the termination of protein biosynthesis. May increase the efficiency of translation by recycling ribosomes from one round of translation to another. The polypeptide is Ribosome-recycling factor (Roseiflexus sp. (strain RS-1)).